We begin with the raw amino-acid sequence, 463 residues long: L-seryl-tRNA(Sec) selenium transferase (463 aa).

Lys-295 is modified (N6-(pyridoxal phosphate)lysine).

The protein belongs to the SelA family. In terms of assembly, homodecamer; pentamer of dimers. Binds only one seryl-tRNA(Sec) per dimer. The cofactor is pyridoxal 5'-phosphate.

It is found in the cytoplasm. The catalysed reaction is L-seryl-tRNA(Sec) + selenophosphate + H(+) = L-selenocysteinyl-tRNA(Sec) + phosphate. It functions in the pathway aminoacyl-tRNA biosynthesis; selenocysteinyl-tRNA(Sec) biosynthesis; selenocysteinyl-tRNA(Sec) from L-seryl-tRNA(Sec) (bacterial route): step 1/1. Its function is as follows. Converts seryl-tRNA(Sec) to selenocysteinyl-tRNA(Sec) required for selenoprotein biosynthesis. The protein is L-seryl-tRNA(Sec) selenium transferase of Escherichia coli O6:H1 (strain CFT073 / ATCC 700928 / UPEC).